The sequence spans 559 residues: PHD finger protein 1 (559 aa).

The 58-residue stretch at 29-86 (PRLWEGQDVLARWTDGLLYLGTIKKVDSAREVCLVQFEDDSQFLVLWKDISPAALPGE) folds into the Tudor domain. 2 PHD-type zinc fingers span residues 87–142 (ELLC…CVFA) and 186–240 (QSYC…CRGG). Disordered stretches follow at residues 338–434 (PVEL…TDAR) and 448–526 (HPSA…GGVS). Residues 369 to 386 (WRSEPEPLRRRQKGKVEE) are compositionally biased toward basic and acidic residues. Polar residues-rich tracts occupy residues 417–426 (NQSYEGSSGY) and 449–459 (PSASTAGTSGD). Positions 481–515 (SSPHSVTASSSSVPALTPGFSRHSPPSPLCRSLSP) are enriched in low complexity.

This sequence belongs to the Polycomblike family. In terms of assembly, associated component of the PRC2 complex. Interacts with p53/TP53. Interacts with CHMP1. In terms of tissue distribution, testis-specific.

The protein localises to the nucleus. It is found in the cytoplasm. Its subcellular location is the cytoskeleton. The protein resides in the microtubule organizing center. It localises to the centrosome. Polycomb group (PcG) that specifically binds histone H3 trimethylated at 'Lys-36' (H3K36me3) and recruits the PRC2 complex. Involved in DNA damage response and is recruited at double-strand breaks (DSBs). Acts by binding to H3K36me3, a mark for transcriptional activation, and recruiting the PRC2 complex: it is however unclear whether recruitment of the PRC2 complex to H3K36me3 leads to enhance or inhibit H3K27me3 methylation mediated by the PRC2 complex. According to some reports, PRC2 recruitment by PHF1 promotes H3K27me3 and subsequent gene silencing by inducing spreading of PRC2 and H3K27me3 into H3K36me3 loci. According to other reports, PHF1 recruits the PRC2 complex at double-strand breaks (DSBs) and inhibits the activity of PRC2. Regulates p53/TP53 stability and prolonges its turnover: may act by specifically binding to a methylated from of p53/TP53. This is PHD finger protein 1 (Phf1) from Mus musculus (Mouse).